The primary structure comprises 54 residues: Small ribosomal subunit protein uS14 (54 aa).

The Zn(2+) site is built by C19, C22, C37, and C40.

It belongs to the universal ribosomal protein uS14 family. Zinc-binding uS14 subfamily. Part of the 30S ribosomal subunit. Zn(2+) serves as cofactor.

Binds 16S rRNA, required for the assembly of 30S particles. The sequence is that of Small ribosomal subunit protein uS14 from Sulfolobus acidocaldarius (strain ATCC 33909 / DSM 639 / JCM 8929 / NBRC 15157 / NCIMB 11770).